An 829-amino-acid chain; its full sequence is Periplasmic nitrate reductase (829 aa).

Positions 1–30 (MKLSRRDFMKANAVAAAAAVAGVSAPTLAA) form a signal peptide, tat-type signal. The region spanning 41–97 (ITWDKAPCRFCGTGCSVLVGSQDGRVVATQGDPDAPVNRGLNCIKGYFLSKIMYGQD) is the 4Fe-4S Mo/W bis-MGD-type domain. 4 residues coordinate [4Fe-4S] cluster: C48, C51, C55, and C83. Residues K85, Q152, N177, C181, 214–221 (WGSNMAEM), 245–249 (STFEH), 264–266 (QTD), M374, Q378, N484, 510–511 (SD), K533, D560, and 719–728 (TGRVLEHWHT) each bind Mo-bis(molybdopterin guanine dinucleotide). A substrate-binding site is contributed by F795. Mo-bis(molybdopterin guanine dinucleotide)-binding residues include N803 and K820.

This sequence belongs to the prokaryotic molybdopterin-containing oxidoreductase family. NasA/NapA/NarB subfamily. Component of the periplasmic nitrate reductase NapAB complex composed of NapA and NapB. [4Fe-4S] cluster is required as a cofactor. The cofactor is Mo-bis(molybdopterin guanine dinucleotide). Post-translationally, predicted to be exported by the Tat system. The position of the signal peptide cleavage has not been experimentally proven.

Its subcellular location is the periplasm. It catalyses the reaction 2 Fe(II)-[cytochrome] + nitrate + 2 H(+) = 2 Fe(III)-[cytochrome] + nitrite + H2O. Functionally, catalytic subunit of the periplasmic nitrate reductase complex NapAB. Receives electrons from NapB and catalyzes the reduction of nitrate to nitrite. The chain is Periplasmic nitrate reductase from Aeromonas hydrophila subsp. hydrophila (strain ATCC 7966 / DSM 30187 / BCRC 13018 / CCUG 14551 / JCM 1027 / KCTC 2358 / NCIMB 9240 / NCTC 8049).